Consider the following 99-residue polypeptide: Carboxysome shell vertex protein CcmL (99 aa).

Residues 1-83 enclose the BMV domain; the sequence is MKIARVCGTV…IDAAVVAIID (83 aa).

It belongs to the CcmL/EutN family. CcmL subfamily. In terms of assembly, homopentamer. May interact with CcmK2, this occurs at very high CcmK2 concentrations. Interacts with full-length CcmM.

It is found in the carboxysome. Functionally, probably forms vertices in the carboxysome, a polyhedral inclusion where RuBisCO (ribulose bisphosphate carboxylase, rbcL-rbcS) is sequestered. Has been modeled to induce curvature upon insertion into an otherwise flat hexagonal molecular layer of CcmK subunits. This chain is Carboxysome shell vertex protein CcmL, found in Thermosynechococcus vestitus (strain NIES-2133 / IAM M-273 / BP-1).